A 282-amino-acid chain; its full sequence is 2-dehydro-3-deoxyphosphooctonate aldolase (282 aa).

It belongs to the KdsA family.

Its subcellular location is the cytoplasm. The enzyme catalyses D-arabinose 5-phosphate + phosphoenolpyruvate + H2O = 3-deoxy-alpha-D-manno-2-octulosonate-8-phosphate + phosphate. It participates in carbohydrate biosynthesis; 3-deoxy-D-manno-octulosonate biosynthesis; 3-deoxy-D-manno-octulosonate from D-ribulose 5-phosphate: step 2/3. It functions in the pathway bacterial outer membrane biogenesis; lipopolysaccharide biosynthesis. In Bordetella avium (strain 197N), this protein is 2-dehydro-3-deoxyphosphooctonate aldolase.